A 337-amino-acid chain; its full sequence is Exopolysaccharide phosphotransferase cps2G (337 aa).

Belongs to the stealth family.

In Lactiplantibacillus plantarum (strain ATCC BAA-793 / NCIMB 8826 / WCFS1) (Lactobacillus plantarum), this protein is Exopolysaccharide phosphotransferase cps2G (cps2G).